We begin with the raw amino-acid sequence, 306 residues long: MATVQLSRSIRIRKTSKKTVFPSQITNEHESLIMVKKLFATSISCITYLRGLFPESSYGERHLDDLSLKILREDKKCPGSLHIIKWIQGCFDALEKRYLRMAVLTLYTNPKEPEKVTEIYQFKFKYTKEGATMDFDSSNTSFKSGTNSEDIKKASVLLIRKLYMLMQNLGPLPNDVILTMTLHYYNAVTPNDYQPPGFKEGVSSHLLLFEGEPVNLQVGMVSTGFHSMKVKVTTEATRVSDLESSLFQESGTTEIAHQGLDCDEEEEECNTEIQKMNFVCSQQSSERSRKKRKVSEPVKVFIPDRK.

Positions 29 to 232 (HESLIMVKKL…TGFHSMKVKV (204 aa)) constitute an HORMA domain.

In terms of assembly, interacts with HORMAD1. Post-translationally, phosphorylated in a SPO11-dependent manner.

It localises to the nucleus. The protein resides in the chromosome. Functionally, essential for synapsis surveillance during meiotic prophase via the recruitment of ATR activity. Plays a key role in the male mid-pachytene checkpoint and the female meiotic prophase checkpoint: required for efficient build-up of ATR activity on unsynapsed chromosome regions, a process believed to form the basis of meiotic silencing of unsynapsed chromatin (MSUC) and meiotic prophase quality control in both sexes. Required for the DNA double-strand break-independent, BRCA1-dependent activation of ATR on the sex chromosomes that is essential for normal sex body formation. The chain is HORMA domain-containing protein 2 (HORMAD2) from Bos taurus (Bovine).